The following is a 71-amino-acid chain: Arrestin-D (71 aa).

The protein belongs to the arrestin family. As to expression, adrenal, cerebral cortex, heart, liver, lung, pituitary and testis.

The sequence is that of Arrestin-D (Dar) from Rattus norvegicus (Rat).